Here is a 482-residue protein sequence, read N- to C-terminus: Bifunctional protein GlmU (482 aa).

Residues 1–241 (MTASTEAAVV…SALVTGVNDR (241 aa)) are pyrophosphorylase. UDP-N-acetyl-alpha-D-glucosamine-binding positions include 12 to 15 (LAAG), Lys26, Gln83, 88 to 89 (GT), 112 to 114 (SGD), Gly151, Glu166, Asn181, and Asn239. Asp114 contacts Mg(2+). Asn239 contacts Mg(2+). Residues 242–262 (VQLSDLGKVLNRRIVAAHQRA) form a linker region. Positions 263-482 (GVTIIDPGST…AARKALGDES (220 aa)) are N-acetyltransferase. UDP-N-acetyl-alpha-D-glucosamine contacts are provided by Arg344 and Lys362. His374 serves as the catalytic Proton acceptor. UDP-N-acetyl-alpha-D-glucosamine is bound by residues Tyr377 and Asn388. Residues Ala391, 397 to 398 (NY), Ser416, and Ala434 contribute to the acetyl-CoA site. A disordered region spans residues 463-482 (KKRPGSAADKAARKALGDES). The segment covering 472–482 (KAARKALGDES) has biased composition (basic and acidic residues).

It in the N-terminal section; belongs to the N-acetylglucosamine-1-phosphate uridyltransferase family. The protein in the C-terminal section; belongs to the transferase hexapeptide repeat family. As to quaternary structure, homotrimer. It depends on Mg(2+) as a cofactor.

It localises to the cytoplasm. The catalysed reaction is alpha-D-glucosamine 1-phosphate + acetyl-CoA = N-acetyl-alpha-D-glucosamine 1-phosphate + CoA + H(+). It carries out the reaction N-acetyl-alpha-D-glucosamine 1-phosphate + UTP + H(+) = UDP-N-acetyl-alpha-D-glucosamine + diphosphate. It functions in the pathway nucleotide-sugar biosynthesis; UDP-N-acetyl-alpha-D-glucosamine biosynthesis; N-acetyl-alpha-D-glucosamine 1-phosphate from alpha-D-glucosamine 6-phosphate (route II): step 2/2. Its pathway is nucleotide-sugar biosynthesis; UDP-N-acetyl-alpha-D-glucosamine biosynthesis; UDP-N-acetyl-alpha-D-glucosamine from N-acetyl-alpha-D-glucosamine 1-phosphate: step 1/1. It participates in bacterial outer membrane biogenesis; LPS lipid A biosynthesis. Its function is as follows. Catalyzes the last two sequential reactions in the de novo biosynthetic pathway for UDP-N-acetylglucosamine (UDP-GlcNAc). The C-terminal domain catalyzes the transfer of acetyl group from acetyl coenzyme A to glucosamine-1-phosphate (GlcN-1-P) to produce N-acetylglucosamine-1-phosphate (GlcNAc-1-P), which is converted into UDP-GlcNAc by the transfer of uridine 5-monophosphate (from uridine 5-triphosphate), a reaction catalyzed by the N-terminal domain. The protein is Bifunctional protein GlmU of Mycolicibacterium smegmatis (strain ATCC 700084 / mc(2)155) (Mycobacterium smegmatis).